Reading from the N-terminus, the 86-residue chain is High affinity immunoglobulin epsilon receptor subunit gamma (86 aa).

A signal peptide spans 1-18; the sequence is MIPAVILFLLLLVEEAAA. At 19 to 23 the chain is on the extracellular side; that stretch reads LGEPQ. Residues 24–44 form a helical membrane-spanning segment; sequence LCYILDAILFLYGIVLTLLYC. Residues 45 to 86 lie on the Cytoplasmic side of the membrane; that stretch reads RLKIQVRKADIASREKSDAVYTGLNTRNQETYETLKHEKPPQ. One can recognise an ITAM domain in the interval 54 to 82; that stretch reads DIASREKSDAVYTGLNTRNQETYETLKHE. Phosphotyrosine occurs at positions 65 and 76. Residue threonine 78 is modified to Phosphothreonine.

Belongs to the CD3Z/FCER1G family. As to quaternary structure, igE Fc receptor is a tetramer of an alpha chain, a beta chain, and two disulfide linked gamma chains. Associates with FCGR1A to form a functional receptor complex. The signaling subunit of immunoglobulin gamma (IgG) Fc receptor complex. As a homodimer or a heterodimer of CD247 and FCER1G, associates with the ligand binding subunit FCGR3A to form a functional receptor complex. Associates with CLEC6A. Interacts with CLEC4E. Interacts (via ITAM domain) with SYK (via SH2 domains); activates SYK, enabling integrin-mediated activation of neutrophils and macrophages. Interacts with common beta chain of interleukin 3 receptor CSF2RB and recruits SYK in response to IL3 stimulation; this interaction is direct. Interacts with CD300LH; the interaction may be indirect. Interacts with CD300LD. Interacts with TARM1. Expressed in leukocytes and pinealocytes. Expression in the pineal gland does not undergo circadian variations.

Its subcellular location is the cell membrane. Adapter protein containing an immunoreceptor tyrosine-based activation motif (ITAM) that transduces activation signals from various immunoreceptors. As a component of the high-affinity immunoglobulin E (IgE) receptor, mediates allergic inflammatory signaling in mast cells. As a constitutive component of interleukin-3 receptor complex, selectively mediates interleukin 4/IL4 production by basophils priming T-cells toward effector T-helper 2 subset. Associates with pattern recognition receptors CLEC4D and CLEC4E to form a functional signaling complex in myeloid cells. Binding of mycobacterial trehalose 6,6'-dimycolate (TDM) to this receptor complex leads to phosphorylation of ITAM, triggering activation of SYK, CARD9 and NF-kappa-B, consequently driving maturation of antigen-presenting cells and shaping antigen-specific priming of T-cells toward effector T-helper 1 and T-helper 17 cell subtypes. May function cooperatively with other activating receptors. Functionally linked to integrin beta-2/ITGB2-mediated neutrophil activation. Also involved in integrin alpha-2/ITGA2-mediated platelet activation. The sequence is that of High affinity immunoglobulin epsilon receptor subunit gamma (Fcer1g) from Rattus norvegicus (Rat).